A 126-amino-acid chain; its full sequence is Aspartate 1-decarboxylase (126 aa).

Ser-25 serves as the catalytic Schiff-base intermediate with substrate; via pyruvic acid. At Ser-25 the chain carries Pyruvic acid (Ser). Residue Thr-57 coordinates substrate. The active-site Proton donor is the Tyr-58. A substrate-binding site is contributed by 73–75 (GAA).

The protein belongs to the PanD family. As to quaternary structure, heterooctamer of four alpha and four beta subunits. It depends on pyruvate as a cofactor. Post-translationally, is synthesized initially as an inactive proenzyme, which is activated by self-cleavage at a specific serine bond to produce a beta-subunit with a hydroxyl group at its C-terminus and an alpha-subunit with a pyruvoyl group at its N-terminus.

Its subcellular location is the cytoplasm. The catalysed reaction is L-aspartate + H(+) = beta-alanine + CO2. The protein operates within cofactor biosynthesis; (R)-pantothenate biosynthesis; beta-alanine from L-aspartate: step 1/1. Catalyzes the pyruvoyl-dependent decarboxylation of aspartate to produce beta-alanine. The chain is Aspartate 1-decarboxylase from Psychrobacter sp. (strain PRwf-1).